We begin with the raw amino-acid sequence, 322 residues long: Protein lin-56 (322 aa).

The disordered stretch occupies residues Ser-264–Ala-322. Basic and acidic residues predominate over residues Glu-275–Tyr-304.

In terms of tissue distribution, widely expressed throughout embryonic development. Expressed in the six multipotent ventral ectodermal blast cells, P3.p-P8.p, which generate the vulva and in their descendants throughout vulval development.

The protein resides in the nucleus. Required for translation, stability and/or localization of lin-15a. In Caenorhabditis elegans, this protein is Protein lin-56 (lin-56).